The following is a 68-amino-acid chain: Large ribosomal subunit protein bL32 (68 aa).

The interval 1 to 20 (MAVQQNKVSKSRRNNRRAHD) is disordered.

The protein belongs to the bacterial ribosomal protein bL32 family.

The chain is Large ribosomal subunit protein bL32 from Ruegeria sp. (strain TM1040) (Silicibacter sp.).